The chain runs to 323 residues: Acetyl-coenzyme A carboxylase carboxyl transferase subunit alpha (323 aa).

The CoA carboxyltransferase C-terminal domain occupies 36–293 (ELELLSAKAQ…KEEVVKNLQI (258 aa)).

This sequence belongs to the AccA family. Acetyl-CoA carboxylase is a heterohexamer composed of biotin carboxyl carrier protein (AccB), biotin carboxylase (AccC) and two subunits each of ACCase subunit alpha (AccA) and ACCase subunit beta (AccD).

Its subcellular location is the cytoplasm. The catalysed reaction is N(6)-carboxybiotinyl-L-lysyl-[protein] + acetyl-CoA = N(6)-biotinyl-L-lysyl-[protein] + malonyl-CoA. Its pathway is lipid metabolism; malonyl-CoA biosynthesis; malonyl-CoA from acetyl-CoA: step 1/1. Its function is as follows. Component of the acetyl coenzyme A carboxylase (ACC) complex. First, biotin carboxylase catalyzes the carboxylation of biotin on its carrier protein (BCCP) and then the CO(2) group is transferred by the carboxyltransferase to acetyl-CoA to form malonyl-CoA. The sequence is that of Acetyl-coenzyme A carboxylase carboxyl transferase subunit alpha from Carboxydothermus hydrogenoformans (strain ATCC BAA-161 / DSM 6008 / Z-2901).